We begin with the raw amino-acid sequence, 61 residues long: UPF0434 protein Avin_14770 (61 aa).

This sequence belongs to the UPF0434 family.

This Azotobacter vinelandii (strain DJ / ATCC BAA-1303) protein is UPF0434 protein Avin_14770.